The chain runs to 165 residues: MATNFFIQPITEEAEAYYPPSVITNKRKDLGVDVYCCSDLVLQPGLNIVRLHIKVACEHMGKKCGFKIMARSSMCTYERLLILANGIGLIDPGYVGELMLKIINLGDTPVQIWAKECLVQLVAQGDHVPDHINILKRNQIFPLFAPTPRGEGRFGSTGEAGIMRT.

It belongs to the dUTPase family. In terms of assembly, homotrimer. It depends on Mg(2+) as a cofactor.

Its subcellular location is the host cytoplasm. It is found in the virion. The catalysed reaction is dUTP + H2O = dUMP + diphosphate + H(+). The viral dUTPase may play a role in lowering the dUTP concentration in natural infections to minimize misincorporation of deoxyuridine into the viral DNA and ensure the fidelity of genome replication. This African swine fever virus (isolate Tick/South Africa/Pretoriuskop Pr4/1996) (ASFV) protein is Deoxyuridine 5'-triphosphate nucleotidohydrolase.